A 299-amino-acid polypeptide reads, in one-letter code: 4-diphosphocytidyl-2-C-methyl-D-erythritol kinase (299 aa).

Lysine 17 is a catalytic residue. 99–109 is an ATP binding site; sequence PLASGLGGGSS. Aspartate 142 is an active-site residue.

This sequence belongs to the GHMP kinase family. IspE subfamily.

It catalyses the reaction 4-CDP-2-C-methyl-D-erythritol + ATP = 4-CDP-2-C-methyl-D-erythritol 2-phosphate + ADP + H(+). It participates in isoprenoid biosynthesis; isopentenyl diphosphate biosynthesis via DXP pathway; isopentenyl diphosphate from 1-deoxy-D-xylulose 5-phosphate: step 3/6. In terms of biological role, catalyzes the phosphorylation of the position 2 hydroxy group of 4-diphosphocytidyl-2C-methyl-D-erythritol. This chain is 4-diphosphocytidyl-2-C-methyl-D-erythritol kinase, found in Deinococcus radiodurans (strain ATCC 13939 / DSM 20539 / JCM 16871 / CCUG 27074 / LMG 4051 / NBRC 15346 / NCIMB 9279 / VKM B-1422 / R1).